The following is a 123-amino-acid chain: Small ribosomal subunit protein eS25 (123 aa).

Basic and acidic residues predominate over residues 1 to 13 (MPPKKDTKGDSKK). The tract at residues 1–34 (MPPKKDTKGDSKKGQKAKAGSGGGKAKKKKWSKG) is disordered. The segment covering 25–34 (KAKKKKWSKG) has biased composition (basic residues).

It belongs to the eukaryotic ribosomal protein eS25 family.

In Branchiostoma belcheri (Amphioxus), this protein is Small ribosomal subunit protein eS25 (RPS25).